The following is a 475-amino-acid chain: Ribulose bisphosphate carboxylase large chain (475 aa).

A propeptide spanning residues 1–2 is cleaved from the precursor; the sequence is MS. An N-acetylproline modification is found at Pro3. The substrate site is built by Asn123 and Thr173. Lys175 acts as the Proton acceptor in catalysis. Substrate is bound at residue Lys177. 3 residues coordinate Mg(2+): Lys201, Asp203, and Glu204. N6-carboxylysine is present on Lys201. His294 serves as the catalytic Proton acceptor. Positions 295, 327, and 379 each coordinate substrate.

This sequence belongs to the RuBisCO large chain family. Type I subfamily. In terms of assembly, heterohexadecamer of 8 large chains and 8 small chains; disulfide-linked. The disulfide link is formed within the large subunit homodimers. Mg(2+) serves as cofactor. In terms of processing, the disulfide bond which can form in the large chain dimeric partners within the hexadecamer appears to be associated with oxidative stress and protein turnover.

It is found in the plastid. It localises to the chloroplast. The enzyme catalyses 2 (2R)-3-phosphoglycerate + 2 H(+) = D-ribulose 1,5-bisphosphate + CO2 + H2O. The catalysed reaction is D-ribulose 1,5-bisphosphate + O2 = 2-phosphoglycolate + (2R)-3-phosphoglycerate + 2 H(+). Its function is as follows. RuBisCO catalyzes two reactions: the carboxylation of D-ribulose 1,5-bisphosphate, the primary event in carbon dioxide fixation, as well as the oxidative fragmentation of the pentose substrate in the photorespiration process. Both reactions occur simultaneously and in competition at the same active site. The sequence is that of Ribulose bisphosphate carboxylase large chain from Welwitschia mirabilis (Tree tumbo).